The following is a 370-amino-acid chain: Galanin receptor type 3 (370 aa).

Topologically, residues 1-20 (MADIQNISLDSPGSVGAVAV) are extracellular. Asn-6 is a glycosylation site (N-linked (GlcNAc...) asparagine). The chain crosses the membrane as a helical span at residues 21–41 (PVVFALIFLLGMVGNGLVLAV). At 42–57 (LLQPGPSAWQEPGSTT) the chain is on the cytoplasmic side. The helical transmembrane segment at 58 to 78 (DLFILNLAVADLCFILCCVPF) threads the bilayer. Residues 79–96 (QAAIYTLDAWLFGAFVCK) lie on the Extracellular side of the membrane. Cys-95 and Cys-172 form a disulfide bridge. Residues 97–118 (TVHLLIYLTMYASSFTLAAVSV) traverse the membrane as a helical segment. Residues 119–138 (DRYLAVRHPLRSRALRTPRN) are Cytoplasmic-facing. The chain crosses the membrane as a helical span at residues 139-159 (ARAAVGLVWLLAALFSAPYLS). Over 160–184 (YYGTVRYGALELCVPAWEDARRRAL) the chain is Extracellular. A helical transmembrane segment spans residues 185-205 (DVATFAAGYLLPVTVVSLAYG). Residues 206 to 236 (RTLCFLWAAVGPAGAAAAEARRRATGRAGRA) are Cytoplasmic-facing. Residues 237–257 (MLTVAALYALCWGPHHALILC) traverse the membrane as a helical segment. The Extracellular segment spans residues 258–259 (FW). Residues 260 to 280 (YGRFAFSPATYACRLASHCLA) form a helical membrane-spanning segment. The Cytoplasmic portion of the chain corresponds to 281-370 (YANSCLNPLV…RLTLSARGPQ (90 aa)). The S-palmitoyl cysteine moiety is linked to residue Cys-308. The disordered stretch occupies residues 328–370 (QPASSGPAGYPGDARPRGWSMEPRGDALRGGETRLTLSARGPQ). Positions 350 to 359 (PRGDALRGGE) are enriched in basic and acidic residues.

The protein belongs to the G-protein coupled receptor 1 family.

It localises to the cell membrane. Functionally, receptor for the hormone galanin and spexin-1. In Mus musculus (Mouse), this protein is Galanin receptor type 3 (Galr3).